The following is a 417-amino-acid chain: 3-oxoacyl-[acyl-carrier-protein] synthase 2 (417 aa).

A Ketosynthase family 3 (KS3) domain is found at Phe-10–Arg-416. Active-site for beta-ketoacyl synthase activity residues include Cys-170, His-311, and His-346.

It belongs to the thiolase-like superfamily. Beta-ketoacyl-ACP synthases family.

The protein localises to the cytoplasm. It catalyses the reaction an ultra-long-chain di-unsaturated fatty acyl-[ACP] + malonyl-[ACP] + H(+) = a 3-oxo-ultra-long-chain di-unsaturated fatty acyl-[ACP] + holo-[ACP] + CO2. The protein operates within lipid metabolism; mycolic acid biosynthesis. Functionally, part of the mycobacterial fatty acid elongation system FAS-II, which is involved in mycolic acid biosynthesis. Catalyzes the elongation of long chain acyl-ACP substrates by the addition of two carbons from malonyl-ACP to an acyl acceptor. Involved in extension of the mycolate chains to full lengths and produces longer chain multiunsaturated hydrocarbons averaging 54 carbons in length. The sequence is that of 3-oxoacyl-[acyl-carrier-protein] synthase 2 (kasB) from Mycobacterium bovis (strain ATCC BAA-935 / AF2122/97).